The primary structure comprises 455 residues: Chromosomal replication initiator protein DnaA (455 aa).

The segment at 1–75 is domain I, interacts with DnaA modulators; that stretch reads MDTNNNIEKE…EILSQNKVGM (75 aa). A domain II region spans residues 75-106; the sequence is MHLAHSVDVRIEVAPKIQINAQANINYKAIKT. The tract at residues 107 to 321 is domain III, AAA+ region; sequence SVKDSYTFEN…GAIIKISVNA (215 aa). ATP is bound by residues Gly151, Gly153, Lys154, and Thr155. The tract at residues 322–455 is domain IV, binds dsDNA; sequence NLMNAPIDLN…DKKTAFNSSE (134 aa).

The protein belongs to the DnaA family. In terms of assembly, oligomerizes as a right-handed, spiral filament on DNA at oriC.

It localises to the cytoplasm. Plays an essential role in the initiation and regulation of chromosomal replication. ATP-DnaA binds to the origin of replication (oriC) to initiate formation of the DNA replication initiation complex once per cell cycle. Binds the DnaA box (a 9 base pair repeat at the origin) and separates the double-stranded (ds)DNA. Forms a right-handed helical filament on oriC DNA; dsDNA binds to the exterior of the filament while single-stranded (ss)DNA is stabiized in the filament's interior. The ATP-DnaA-oriC complex binds and stabilizes one strand of the AT-rich DNA unwinding element (DUE), permitting loading of DNA polymerase. After initiation quickly degrades to an ADP-DnaA complex that is not apt for DNA replication. Binds acidic phospholipids. This Helicobacter pylori (strain G27) protein is Chromosomal replication initiator protein DnaA.